The primary structure comprises 995 residues: KN motif and ankyrin repeat domain-containing protein 4 (995 aa).

Disordered regions lie at residues 1 to 29 (MEKT…SVET) and 68 to 127 (TLPR…EVSY). A compositionally biased stretch (polar residues) spans 101-124 (LGTQEQNQSPPLGNAPQASTSRSE). A coiled-coil region spans residues 343-404 (SSLKQQVSAL…EGQFHQENAK (62 aa)). 5 disordered regions span residues 443–467 (ESWG…GNQS), 503–558 (EAGT…PTDA), 617–642 (QAHP…TSLK), 663–705 (LQFV…PDHK), and 721–740 (PEGT…VPHS). Residues 511–523 (GPQGGTRGAGGFL) are compositionally biased toward gly residues. Basic and acidic residues predominate over residues 526-549 (SDRKTPPAGREETSSNLPGKEHPG). Residues 625-640 (PASSSSPPVEISPSTS) are compositionally biased toward low complexity. Residues 680 to 693 (TSGEDSTPEDLSDS) show a composition bias toward acidic residues. Positions 694-705 (EAEKKCDGPDHK) are enriched in basic and acidic residues. 5 ANK repeats span residues 823 to 853 (NGNT…NVDH), 862 to 890 (VMIT…NVNI), 895 to 924 (GGQT…DVNL), 928 to 958 (DGSS…DSSL), and 962 to 992 (AGRT…QGRS).

As to expression, strongly expressed in colon, liver, lung, skeletal muscle and kidney.

The protein localises to the cytoplasm. In terms of biological role, may be involved in the control of cytoskeleton formation by regulating actin polymerization. The protein is KN motif and ankyrin repeat domain-containing protein 4 (KANK4) of Homo sapiens (Human).